The following is a 371-amino-acid chain: Neuropeptide Y receptor type 6 (371 aa).

At 1 to 31 the chain is on the extracellular side; it reads MEVSLNDPASNKTSAKSNSSAFFYFESCQSP. 2 N-linked (GlcNAc...) asparagine glycosylation sites follow: N11 and N18. The chain crosses the membrane as a helical span at residues 32-52; it reads SLALLLLLIAYTVVLIMGICG. The Cytoplasmic portion of the chain corresponds to 53-72; that stretch reads NLSLITIIFKKQREAQNVTN. Residues 73–93 form a helical membrane-spanning segment; the sequence is ILIANLSLSDILVCVMCIPFT. At 94-111 the chain is on the extracellular side; the sequence is AIYTLMDRWIFGNTMCKL. C109 and C196 are joined by a disulfide. The chain crosses the membrane as a helical span at residues 112–132; it reads TSYVQSVSISVSIFSLVLIAI. At 133-150 the chain is on the cytoplasmic side; it reads ERYQLIVNPRGWKPSASH. A helical membrane pass occupies residues 151 to 171; sequence AYWGIMLIWLFSLLLSIPLLL. Residues 172–213 lie on the Extracellular side of the membrane; it reads SYHLTDEPFRNLSLPTDLYSHHVVCVEHWPSKTNQLLYSTSL. The N-linked (GlcNAc...) asparagine glycan is linked to N182. A helical membrane pass occupies residues 214-234; the sequence is IMLQYFVPLGFMFICYLKIVI. Over 235–263 the chain is Cytoplasmic; sequence CLHKRNSKIDRRRENESRLTENKRINTML. The chain crosses the membrane as a helical span at residues 264–284; it reads ISIVVTFAACWLPLNTFNVIF. Topologically, residues 285–297 are extracellular; sequence DWYHEVLMSCHHD. The helical transmembrane segment at 298 to 318 threads the bilayer; it reads LVFAICHLVAMVSTCINPLFY. Topologically, residues 319-371 are cytoplasmic; sequence GFLNRNFQKDLVVLIHHCLCFALRERYENIAISTLHTDESKGSLRVAHIPAGI. A lipid anchor (S-palmitoyl cysteine) is attached at C336.

Belongs to the G-protein coupled receptor 1 family. In terms of tissue distribution, expressed in hippocampus, striatum, hypothalamus, cerebellum, small intestine, colon and adrenal gland.

The protein localises to the cell membrane. Receptor for neuropeptide Y and peptide YY. The activity of this receptor is mediated by G proteins that inhibit adenylate cyclase activity. The sequence is that of Neuropeptide Y receptor type 6 (NPY6R) from Oryctolagus cuniculus (Rabbit).